A 137-amino-acid polypeptide reads, in one-letter code: Small ribosomal subunit protein eS19 (137 aa).

It belongs to the eukaryotic ribosomal protein eS19 family. As to quaternary structure, component of the small ribosomal subunit.

It is found in the cytoplasm. In Encephalitozoon cuniculi (strain GB-M1) (Microsporidian parasite), this protein is Small ribosomal subunit protein eS19 (RPS19).